A 317-amino-acid chain; its full sequence is NAC domain-containing protein 55 (317 aa).

One can recognise an NAC domain in the interval 14 to 162 (LPPGFRFYPT…DWVLCRIYKK (149 aa)). The DNA-binding element occupies 111 to 168 (VGIKKALVFYIGKAPKGTKTNWIMHEYRLIEPSRRNGSTKLDDWVLCRIYKKQTSAQK).

In terms of tissue distribution, expressed in leaves.

The protein resides in the nucleus. Functionally, transcription factors that bind specifically to the 5'-CATGTG-3' motif. The sequence is that of NAC domain-containing protein 55 (NAC055) from Arabidopsis thaliana (Mouse-ear cress).